A 932-amino-acid polypeptide reads, in one-letter code: 2-oxoglutarate dehydrogenase E1 component (932 aa).

This sequence belongs to the alpha-ketoglutarate dehydrogenase family. In terms of assembly, homodimer. Part of the 2-oxoglutarate dehydrogenase (OGDH) complex composed of E1 (2-oxoglutarate dehydrogenase), E2 (dihydrolipoamide succinyltransferase) and E3 (dihydrolipoamide dehydrogenase); the complex contains multiple copies of the three enzymatic components (E1, E2 and E3). Thiamine diphosphate is required as a cofactor.

It catalyses the reaction N(6)-[(R)-lipoyl]-L-lysyl-[protein] + 2-oxoglutarate + H(+) = N(6)-[(R)-S(8)-succinyldihydrolipoyl]-L-lysyl-[protein] + CO2. In terms of biological role, E1 component of the 2-oxoglutarate dehydrogenase (OGDH) complex which catalyzes the decarboxylation of 2-oxoglutarate, the first step in the conversion of 2-oxoglutarate to succinyl-CoA and CO(2). In Staphylococcus aureus (strain bovine RF122 / ET3-1), this protein is 2-oxoglutarate dehydrogenase E1 component.